Consider the following 299-residue polypeptide: Acetylglutamate kinase (299 aa).

Substrate-binding positions include 72–73 (GG), Arg94, and Asn196.

It belongs to the acetylglutamate kinase family. ArgB subfamily.

It localises to the cytoplasm. The catalysed reaction is N-acetyl-L-glutamate + ATP = N-acetyl-L-glutamyl 5-phosphate + ADP. The protein operates within amino-acid biosynthesis; L-arginine biosynthesis; N(2)-acetyl-L-ornithine from L-glutamate: step 2/4. Catalyzes the ATP-dependent phosphorylation of N-acetyl-L-glutamate. This chain is Acetylglutamate kinase, found in Paraburkholderia phymatum (strain DSM 17167 / CIP 108236 / LMG 21445 / STM815) (Burkholderia phymatum).